A 137-amino-acid chain; its full sequence is Small ribosomal subunit protein uS11 (137 aa).

Residues 1 to 11 (MAKQAKAGAAR) are compositionally biased toward low complexity. The tract at residues 1–32 (MAKQAKAGAARRPQRGRRRERKNVPRGQAHVQ) is disordered. Residues 12–21 (RPQRGRRRER) are compositionally biased toward basic residues.

This sequence belongs to the universal ribosomal protein uS11 family. Part of the 30S ribosomal subunit. Interacts with proteins S7 and S18. Binds to IF-3.

In terms of biological role, located on the platform of the 30S subunit, it bridges several disparate RNA helices of the 16S rRNA. Forms part of the Shine-Dalgarno cleft in the 70S ribosome. The polypeptide is Small ribosomal subunit protein uS11 (Herpetosiphon aurantiacus (strain ATCC 23779 / DSM 785 / 114-95)).